The chain runs to 177 residues: ATP synthase subunit delta (177 aa).

Belongs to the ATPase delta chain family. In terms of assembly, F-type ATPases have 2 components, F(1) - the catalytic core - and F(0) - the membrane proton channel. F(1) has five subunits: alpha(3), beta(3), gamma(1), delta(1), epsilon(1). F(0) has three main subunits: a(1), b(2) and c(10-14). The alpha and beta chains form an alternating ring which encloses part of the gamma chain. F(1) is attached to F(0) by a central stalk formed by the gamma and epsilon chains, while a peripheral stalk is formed by the delta and b chains.

It localises to the cell inner membrane. F(1)F(0) ATP synthase produces ATP from ADP in the presence of a proton or sodium gradient. F-type ATPases consist of two structural domains, F(1) containing the extramembraneous catalytic core and F(0) containing the membrane proton channel, linked together by a central stalk and a peripheral stalk. During catalysis, ATP synthesis in the catalytic domain of F(1) is coupled via a rotary mechanism of the central stalk subunits to proton translocation. Its function is as follows. This protein is part of the stalk that links CF(0) to CF(1). It either transmits conformational changes from CF(0) to CF(1) or is implicated in proton conduction. The sequence is that of ATP synthase subunit delta from Klebsiella pneumoniae (strain 342).